We begin with the raw amino-acid sequence, 92 residues long: Protein S100-A12 (92 aa).

EF-hand domains follow at residues 13 to 48 and 49 to 84; these read NIFH…IKNI and KDKA…ALKA. His16 provides a ligand contact to Cu cation. A Zn(2+)-binding site is contributed by His16. Ca(2+) contacts are provided by Ser19, Lys22, and His24. Asp26 provides a ligand contact to Cu cation. Asp26 contacts Zn(2+). Ca(2+) is bound by residues Thr27 and Glu32. The hinge domain stretch occupies residues 38–53; the sequence is TKELANTIKNIKDKAV. The Ca(2+) site is built by Asp62, Asn64, Asp66, Gln68, and Glu73. Cu cation contacts are provided by His86 and His90. Zn(2+) contacts are provided by His86 and His90.

This sequence belongs to the S-100 family. Homodimer. Homooligomer (tetramer or hexamer) in the presence of calcium, zinc and copper ions. Interacts with AGER and both calcium and zinc are essential for the interaction. Interacts with CACYBP in a calcium-dependent manner. In terms of tissue distribution, predominantly expressed by neutrophils, monocytes and activated macrophages. Expressed by eosinophils and macrophages in asthmatic airways in regions where mast cells accumulate. Found in high concentrations in the serum of patients suffering from various inflammatory disorders, such as rheumatoid arthritis, psoriatic arthritis, Crohn's disease, ulcerative colitis, and Kawasaki disease.

The protein localises to the secreted. The protein resides in the cytoplasm. It localises to the cytoskeleton. It is found in the cell membrane. S100A12 is a calcium-, zinc- and copper-binding protein which plays a prominent role in the regulation of inflammatory processes and immune response. Its pro-inflammatory activity involves recruitment of leukocytes, promotion of cytokine and chemokine production, and regulation of leukocyte adhesion and migration. Acts as an alarmin or a danger associated molecular pattern (DAMP) molecule and stimulates innate immune cells via binding to receptor for advanced glycation endproducts (AGER). Binding to AGER activates the MAP-kinase and NF-kappa-B signaling pathways leading to production of pro-inflammatory cytokines and up-regulation of cell adhesion molecules ICAM1 and VCAM1. Acts as a monocyte and mast cell chemoattractant. Can stimulate mast cell degranulation and activation which generates chemokines, histamine and cytokines inducing further leukocyte recruitment to the sites of inflammation. Can inhibit the activity of matrix metalloproteinases; MMP2, MMP3 and MMP9 by chelating Zn(2+) from their active sites. Possesses filariacidal and filariastatic activity. Calcitermin possesses antifungal activity against C.albicans and is also active against E.coli and P.aeruginosa but not L.monocytogenes and S.aureus. This Homo sapiens (Human) protein is Protein S100-A12 (S100A12).